The chain runs to 284 residues: Bifunctional protein FolD 1 (284 aa).

Residues G164–S166, S189, and I230 each bind NADP(+).

The protein belongs to the tetrahydrofolate dehydrogenase/cyclohydrolase family. In terms of assembly, homodimer.

It carries out the reaction (6R)-5,10-methylene-5,6,7,8-tetrahydrofolate + NADP(+) = (6R)-5,10-methenyltetrahydrofolate + NADPH. The catalysed reaction is (6R)-5,10-methenyltetrahydrofolate + H2O = (6R)-10-formyltetrahydrofolate + H(+). It participates in one-carbon metabolism; tetrahydrofolate interconversion. Functionally, catalyzes the oxidation of 5,10-methylenetetrahydrofolate to 5,10-methenyltetrahydrofolate and then the hydrolysis of 5,10-methenyltetrahydrofolate to 10-formyltetrahydrofolate. The chain is Bifunctional protein FolD 1 from Rubrobacter xylanophilus (strain DSM 9941 / JCM 11954 / NBRC 16129 / PRD-1).